The following is a 91-amino-acid chain: Sec-independent protein translocase protein TatAt (91 aa).

Residues 9–29 traverse the membrane as a helical segment; it reads FPGLPGGPELLVVLLIVVLLF. Residues 48 to 91 form a disordered region; the sequence is FQRGREEIEDELQDMTGDDDEDDATSESSADSVSTDSVSTESSN. Residues 54–72 show a composition bias toward acidic residues; the sequence is EIEDELQDMTGDDDEDDAT. The segment covering 73–91 has biased composition (low complexity); that stretch reads SESSADSVSTDSVSTESSN.

The protein belongs to the TatA/E family. As to quaternary structure, forms a complex with TatC. Cytoplasmic and membrane-bound TatA form high-molecular-weight complexes.

It is found in the cell membrane. It localises to the cytoplasm. Functionally, part of the twin-arginine translocation (Tat) system that transports large folded proteins containing a characteristic twin-arginine motif in their signal peptide across membranes. TatA could form the protein-conducting channel of the Tat system. The polypeptide is Sec-independent protein translocase protein TatAt (Haloferax volcanii (strain ATCC 29605 / DSM 3757 / JCM 8879 / NBRC 14742 / NCIMB 2012 / VKM B-1768 / DS2) (Halobacterium volcanii)).